Consider the following 384-residue polypeptide: MAKHLFTSESVSEGHPDKIADQISDAVLDAILEQDPKARVACETYVKTGMVLVGGEITTSAWVDIEEITRNTVREIGYVHSDMGFDANSCAVLSAIGKQSPDINQGVDRADPLEQGAGDQGLMFGYATNETDVLMPAPITYAHRLVQRQAEVRKNGSLPWLRPDAKSQVTFQYDDGKIVGIDAVVLSTQHSEDIDQKSLQEAVMEEIIKPVLPTEWLNASTKFFINPTGRFVIGGPMGDCGLTGRKIIVDTYGGMARHGGGAFSGKDPSKVDRSAAYAARYVAKNIVAAGLADRCEIQVSYAIGVAEPTSIMVETFGTEKLPTEQLTLLVREFFDLRPYGLIQMLDLLHPIYKETAAYGHFGREHFPWEKTDKAAVLRDAAGLK.

H15 contributes to the ATP binding site. D17 is a Mg(2+) binding site. E43 lines the K(+) pocket. 2 residues coordinate L-methionine: E56 and Q99. The segment at 99–109 (QSPDINQGVDR) is flexible loop. ATP-binding positions include 164-166 (DAK), 230-231 (RF), D239, 245-246 (RK), A262, and K266. D239 provides a ligand contact to L-methionine. K270 is an L-methionine binding site.

The protein belongs to the AdoMet synthase family. As to quaternary structure, homotetramer; dimer of dimers. The cofactor is Mg(2+). K(+) serves as cofactor.

It is found in the cytoplasm. It catalyses the reaction L-methionine + ATP + H2O = S-adenosyl-L-methionine + phosphate + diphosphate. The protein operates within amino-acid biosynthesis; S-adenosyl-L-methionine biosynthesis; S-adenosyl-L-methionine from L-methionine: step 1/1. In terms of biological role, catalyzes the formation of S-adenosylmethionine (AdoMet) from methionine and ATP. The overall synthetic reaction is composed of two sequential steps, AdoMet formation and the subsequent tripolyphosphate hydrolysis which occurs prior to release of AdoMet from the enzyme. This Enterobacter sp. (strain 638) protein is S-adenosylmethionine synthase.